The sequence spans 53 residues: Ovomucoid (53 aa).

In terms of domain architecture, Kazal-like spans 3 to 53 (VDCSEYPQPTCTTEHRPVCGSNNETYGNKCNFCNAVVKSNGTLTVSHFGKC). 3 disulfide bridges follow: Cys-5–Cys-35, Cys-13–Cys-32, and Cys-21–Cys-53. Asn-42 carries an N-linked (GlcNAc...) asparagine glycan.

The protein localises to the secreted. In Polyplectron bicalcaratum (Grey peacock-pheasant), this protein is Ovomucoid.